The primary structure comprises 299 residues: tRNA dimethylallyltransferase (299 aa).

13-20 (GPTASGKT) is a binding site for ATP. A substrate-binding site is contributed by 15-20 (TASGKT). Positions 38–41 (DSRQ) are interaction with substrate tRNA.

Belongs to the IPP transferase family. As to quaternary structure, monomer. The cofactor is Mg(2+).

It carries out the reaction adenosine(37) in tRNA + dimethylallyl diphosphate = N(6)-dimethylallyladenosine(37) in tRNA + diphosphate. Functionally, catalyzes the transfer of a dimethylallyl group onto the adenine at position 37 in tRNAs that read codons beginning with uridine, leading to the formation of N6-(dimethylallyl)adenosine (i(6)A). This Prochlorococcus marinus (strain MIT 9313) protein is tRNA dimethylallyltransferase.